The following is a 210-amino-acid chain: MAASKDRENFVYIAKLAEQAERYEEMVESMKNVANLDVELTVEERKKGVAILDFILRLGAITSALGAAATMATSDETLPFFTQFFQFEASYDSFSTFQFFVIAMAFVGGYLVLSLPFSIVTIIRPHAAGPRLFLIILDTVFLTLATSSAAAATAIVYLAHNGNQDSNWLAICNQFGDFCQEISGAVVASFVAVVLFVLLIVMCAVALRNH.

The Cytoplasmic portion of the chain corresponds to 1–48 (MAASKDRENFVYIAKLAEQAERYEEMVESMKNVANLDVELTVEERKKG). The chain crosses the membrane as a helical span at residues 49–69 (VAILDFILRLGAITSALGAAA). Over 70 to 98 (TMATSDETLPFFTQFFQFEASYDSFSTFQ) the chain is Extracellular. The chain crosses the membrane as a helical span at residues 99–119 (FFVIAMAFVGGYLVLSLPFSI). The Cytoplasmic portion of the chain corresponds to 120–131 (VTIIRPHAAGPR). Residues 132-152 (LFLIILDTVFLTLATSSAAAA) traverse the membrane as a helical segment. Topologically, residues 153-184 (TAIVYLAHNGNQDSNWLAICNQFGDFCQEISG) are extracellular. Residues 185–205 (AVVASFVAVVLFVLLIVMCAV) traverse the membrane as a helical segment. The Cytoplasmic portion of the chain corresponds to 206-210 (ALRNH).

It belongs to the Casparian strip membrane proteins (CASP) family. As to quaternary structure, homodimer and heterodimers.

It localises to the cell membrane. Regulates membrane-cell wall junctions and localized cell wall deposition. Required for establishment of the Casparian strip membrane domain (CSD) and the subsequent formation of Casparian strips, a cell wall modification of the root endodermis that determines an apoplastic barrier between the intraorganismal apoplasm and the extraorganismal apoplasm and prevents lateral diffusion. The polypeptide is Casparian strip membrane protein 4 (Glycine max (Soybean)).